A 115-amino-acid polypeptide reads, in one-letter code: MNMLTALLINITLSLCLITIAFWLPQLNMYTEKASPYECGFDPMSSARLPFSMKFFLVAITFLLFDLEIALLLPLPWAMQINNIKVMMLTSFILVSVLALGLAYEWMQKGLEWTE.

Helical transmembrane passes span 4 to 24 (LTAL…AFWL), 55 to 75 (FFLV…LLPL), and 86 to 106 (VMML…AYEW).

This sequence belongs to the complex I subunit 3 family. As to quaternary structure, core subunit of respiratory chain NADH dehydrogenase (Complex I) which is composed of 45 different subunits. Interacts with TMEM186. Interacts with TMEM242.

The protein localises to the mitochondrion inner membrane. It catalyses the reaction a ubiquinone + NADH + 5 H(+)(in) = a ubiquinol + NAD(+) + 4 H(+)(out). Functionally, core subunit of the mitochondrial membrane respiratory chain NADH dehydrogenase (Complex I) which catalyzes electron transfer from NADH through the respiratory chain, using ubiquinone as an electron acceptor. Essential for the catalytic activity of complex I. This chain is NADH-ubiquinone oxidoreductase chain 3, found in Isthmomys pirrensis (Mount Pirri Isthmus rat).